A 130-amino-acid polypeptide reads, in one-letter code: UPF0102 protein RPE_0358 (130 aa).

It belongs to the UPF0102 family.

In Rhodopseudomonas palustris (strain BisA53), this protein is UPF0102 protein RPE_0358.